Here is a 277-residue protein sequence, read N- to C-terminus: Thiazole synthase (277 aa).

The Schiff-base intermediate with DXP role is filled by Lys116. Residues Gly177, 203-204 (AG), and 225-226 (NT) contribute to the 1-deoxy-D-xylulose 5-phosphate site.

Belongs to the ThiG family. In terms of assembly, homotetramer. Forms heterodimers with either ThiH or ThiS.

It localises to the cytoplasm. The enzyme catalyses [ThiS sulfur-carrier protein]-C-terminal-Gly-aminoethanethioate + 2-iminoacetate + 1-deoxy-D-xylulose 5-phosphate = [ThiS sulfur-carrier protein]-C-terminal Gly-Gly + 2-[(2R,5Z)-2-carboxy-4-methylthiazol-5(2H)-ylidene]ethyl phosphate + 2 H2O + H(+). The protein operates within cofactor biosynthesis; thiamine diphosphate biosynthesis. Functionally, catalyzes the rearrangement of 1-deoxy-D-xylulose 5-phosphate (DXP) to produce the thiazole phosphate moiety of thiamine. Sulfur is provided by the thiocarboxylate moiety of the carrier protein ThiS. In vitro, sulfur can be provided by H(2)S. This chain is Thiazole synthase, found in Thermosynechococcus vestitus (strain NIES-2133 / IAM M-273 / BP-1).